Here is a 243-residue protein sequence, read N- to C-terminus: Type III pantothenate kinase (243 aa).

Residue 6-13 (DGGNTFIK) coordinates ATP. Residues Tyr87 and 94–97 (GKDR) each bind substrate. The Proton acceptor role is filled by Asp96. Residue Asp117 coordinates K(+). Thr120 contributes to the ATP binding site. Thr172 lines the substrate pocket.

It belongs to the type III pantothenate kinase family. In terms of assembly, homodimer. Requires NH4(+) as cofactor. K(+) serves as cofactor.

The protein localises to the cytoplasm. The catalysed reaction is (R)-pantothenate + ATP = (R)-4'-phosphopantothenate + ADP + H(+). It participates in cofactor biosynthesis; coenzyme A biosynthesis; CoA from (R)-pantothenate: step 1/5. Catalyzes the phosphorylation of pantothenate (Pan), the first step in CoA biosynthesis. This is Type III pantothenate kinase from Christiangramia forsetii (strain DSM 17595 / CGMCC 1.15422 / KT0803) (Gramella forsetii).